A 348-amino-acid polypeptide reads, in one-letter code: MPGWRLLAWAGARVLDRGTGGLGTALGSGNRTDICVLVRSLHGKSGTWWDEHLSEENVSFVKQLVSDENKAQLASKLCPLKDEPWPIHPWEPGSSRVGLVALKLGMMPLWTKDGKKHVVTLLQVQDCHVLKYTPKENHNGKMAALTVGGKTVSRFHKSTSILEFYQELGLPPKQKIKMFNVTDNAVIKPGTPLYAAHFRPGQYVDVTAKTIGKGFQGVMKRWGFKGQPATHGQTKTHRRPGAISTGDVARVWPGTKMPGQLGNVDRTAFGLKVWRINTKHNIIYVNGSVPGHRNCLVKIKDSVLPAYKDFCKNLPFPTYFPDEDEKELPEDLYDEEVCQPGAPSITFV.

Residues 1 to 40 constitute a mitochondrion transit peptide; it reads MPGWRLLAWAGARVLDRGTGGLGTALGSGNRTDICVLVRS.

Belongs to the universal ribosomal protein uL3 family. Component of the mitochondrial ribosome large subunit (39S) which comprises a 16S rRNA and about 50 distinct proteins.

It is found in the mitochondrion. This Bos taurus (Bovine) protein is Large ribosomal subunit protein uL3m (MRPL3).